The following is a 349-amino-acid chain: Protein RecA (349 aa).

65-72 (GPESSGKT) is a binding site for ATP.

It belongs to the RecA family.

The protein localises to the cytoplasm. Functionally, can catalyze the hydrolysis of ATP in the presence of single-stranded DNA, the ATP-dependent uptake of single-stranded DNA by duplex DNA, and the ATP-dependent hybridization of homologous single-stranded DNAs. It interacts with LexA causing its activation and leading to its autocatalytic cleavage. This chain is Protein RecA, found in Azotobacter vinelandii.